Here is a 195-residue protein sequence, read N- to C-terminus: Imidazoleglycerol-phosphate dehydratase (195 aa).

The protein belongs to the imidazoleglycerol-phosphate dehydratase family.

The protein resides in the cytoplasm. It carries out the reaction D-erythro-1-(imidazol-4-yl)glycerol 3-phosphate = 3-(imidazol-4-yl)-2-oxopropyl phosphate + H2O. It participates in amino-acid biosynthesis; L-histidine biosynthesis; L-histidine from 5-phospho-alpha-D-ribose 1-diphosphate: step 6/9. This is Imidazoleglycerol-phosphate dehydratase from Paracoccus denitrificans (strain Pd 1222).